The following is a 153-amino-acid chain: Pheromone-binding protein Gp-9 (153 aa).

An N-terminal signal peptide occupies residues 1–19 (MKTLILHICIFALVAFASA). Cystine bridges form between C37–C77, C73–C129, and C118–C138.

Belongs to the PBP/GOBP family. In terms of assembly, homodimer.

It localises to the secreted. Colony queen number, a major feature of social organization, is associated with worker genotype for Gp-9. Colonies are headed by either a single reproductive queen (monogyne form) or multiple queens (polygyne form). Differences in worker Gp-9 genotypes between social forms may cause differences in workers' abilities to recognize queens and regulate their numbers. In Solenopsis nigella gensterblumi (Fire ant), this protein is Pheromone-binding protein Gp-9.